A 492-amino-acid polypeptide reads, in one-letter code: GMP reductase (492 aa).

NADP(+) contacts are provided by residues 30-31 and Arg-78; that span reads SR. 2 consecutive CBS domains span residues 99–162 and 164–223; these read LIED…LVET and MTPV…LNAT. NADP(+) is bound by residues 260 to 262 and 313 to 314; these read DIA and VG. Gly-314, Gly-316, and Cys-319 together coordinate K(+). Catalysis depends on Cys-319, which acts as the Thioimidate intermediate. Thr-321 (proton donor/acceptor) is an active-site residue. Arg-322 contacts K(+). Residues 352–354, 375–376, and 401–403 contribute to the GMP site; these read DGG, GN, and GMA. NADP(+) is bound by residues Met-402 and 454 to 457; that span reads SGIS. The Microbody targeting signal motif lies at 490-492; that stretch reads SKL.

Belongs to the IMPDH/GMPR family. GuaC type 1 subfamily. As to quaternary structure, homotetramer.

The protein localises to the glycosome. The catalysed reaction is IMP + NH4(+) + NADP(+) = GMP + NADPH + 2 H(+). With respect to regulation, activated by GTP and inhibited by ATP and IMP. Mycophenolic acid (MPA) is a competitive inhibitor of the enzyme with respect to NADPH. Catalyzes the irreversible NADPH-dependent deamination of GMP to IMP. It functions in the conversion of nucleobase, nucleoside and nucleotide derivatives of G to A nucleotides, and in maintaining the intracellular balance of A and G nucleotides. This chain is GMP reductase, found in Leishmania major.